We begin with the raw amino-acid sequence, 226 residues long: Ras-related protein RABA4a (226 aa).

At Thr-2 the chain carries N-acetylthreonine. 24 to 31 lines the GTP pocket; the sequence is GDSAVGKS. An Effector region motif is present at residues 46-54; sequence SKATIGVEF. Residues 72–76, 130–133, and 160–161 contribute to the GTP site; these read DTAGQ, NKSD, and SA. Residues 189–226 are disordered; it reads ASEDQENGNPGSLAGKKIDIVPGPGQVIPNKSNMCCNS. Residues 217–226 are compositionally biased toward polar residues; the sequence is PNKSNMCCNS. S-geranylgeranyl cysteine attachment occurs at residues Cys-223 and Cys-224.

The protein belongs to the small GTPase superfamily. Rab family. In terms of assembly, interacts with TCTP1.

It localises to the cell membrane. Functionally, intracellular vesicle trafficking and protein transport. The chain is Ras-related protein RABA4a from Arabidopsis thaliana (Mouse-ear cress).